The following is a 560-amino-acid chain: Cytosolic purine 5'-nucleotidase (560 aa).

The Nucleophile role is filled by D52. Positions 52 and 54 each coordinate IMP. Residues D52 and D54 each contribute to the Mg(2+) site. D54 (proton donor) is an active-site residue. Positions 144 and 154 each coordinate ATP. 7 residues coordinate IMP: R202, D206, K215, T249, N250, S251, and K292. D351 serves as a coordination point for Mg(2+). Phosphoserine is present on S418. ATP-binding residues include Q453 and R456. Phosphoserine occurs at positions 502, 511, and 527. Residues 541–560 are disordered; the sequence is PQEITHCHDEDDDEEEEEEE. The tract at residues 548–560 is required for tetramer assembly; the sequence is HDEDDDEEEEEEE. Residues 550 to 560 are compositionally biased toward acidic residues; sequence EDDDEEEEEEE.

Belongs to the 5'(3')-deoxyribonucleotidase family. As to quaternary structure, homotetramer. It depends on Mg(2+) as a cofactor.

The protein localises to the cytoplasm. Its subcellular location is the cytosol. The enzyme catalyses a ribonucleoside 5'-phosphate + H2O = a ribonucleoside + phosphate. It carries out the reaction a 2'-deoxyribonucleoside + a ribonucleoside 5'-phosphate = a ribonucleoside + a 2'-deoxyribonucleoside 5'-phosphate. The catalysed reaction is IMP + H2O = inosine + phosphate. It catalyses the reaction GMP + H2O = guanosine + phosphate. The enzyme catalyses dGMP + H2O = 2'-deoxyguanosine + phosphate. It carries out the reaction dIMP + H2O = 2'-deoxyinosine + phosphate. The catalysed reaction is XMP + H2O = xanthosine + phosphate. It catalyses the reaction inosine + GMP = guanosine + IMP. The enzyme catalyses dGMP + inosine = 2'-deoxyguanosine + IMP. It carries out the reaction dIMP + inosine = 2'-deoxyinosine + IMP. The catalysed reaction is inosine + UMP = uridine + IMP. It catalyses the reaction inosine + CMP = cytidine + IMP. The enzyme catalyses inosine + AMP = IMP + adenosine. With respect to regulation, allosterically activated by various compounds including ATP, 2,3-BPG/2,3-Bisphosphoglyceric acid and Ap4A/P1,P4-bis(5'-adenosyl) tetraphosphate. Binding of an allosteric activator is a prerequisiste to magnesium and substrate binding. Inhibited by inorganic phosphate. Functionally, broad specificity cytosolic 5'-nucleotidase that catalyzes the dephosphorylation of 6-hydroxypurine nucleoside 5'-monophosphates. In addition, possesses a phosphotransferase activity by which it can transfer a phosphate from a donor nucleoside monophosphate to an acceptor nucleoside, preferably inosine, deoxyinosine and guanosine. Has the highest activities for IMP and GMP followed by dIMP, dGMP and XMP. Could also catalyze the transfer of phosphates from pyrimidine monophosphates but with lower efficiency. Through these activities regulates the purine nucleoside/nucleotide pools within the cell. This chain is Cytosolic purine 5'-nucleotidase, found in Mus musculus (Mouse).